The sequence spans 319 residues: ATP-dependent 6-phosphofructokinase (319 aa).

Residue Gly11 participates in ATP binding. An ADP-binding site is contributed by 21–25 (RAVVR). Residues 72–73 (RC) and 102–105 (GDGS) contribute to the ATP site. Residue Asp103 participates in Mg(2+) binding. A substrate-binding site is contributed by 125-127 (TID). The Proton acceptor role is filled by Asp127. Arg154 is an ADP binding site. Substrate-binding positions include Arg162 and 169-171 (MGR). ADP-binding positions include 185-187 (GAE), Arg211, and 213-215 (KKH). Residues Glu222, Arg243, and 249 to 252 (HVQR) contribute to the substrate site.

Belongs to the phosphofructokinase type A (PFKA) family. ATP-dependent PFK group I subfamily. Prokaryotic clade 'B1' sub-subfamily. In terms of assembly, homotetramer. The cofactor is Mg(2+).

The protein localises to the cytoplasm. The enzyme catalyses beta-D-fructose 6-phosphate + ATP = beta-D-fructose 1,6-bisphosphate + ADP + H(+). It functions in the pathway carbohydrate degradation; glycolysis; D-glyceraldehyde 3-phosphate and glycerone phosphate from D-glucose: step 3/4. Its activity is regulated as follows. Allosterically activated by ADP and other diphosphonucleosides, and allosterically inhibited by phosphoenolpyruvate. Catalyzes the phosphorylation of D-fructose 6-phosphate to fructose 1,6-bisphosphate by ATP, the first committing step of glycolysis. The protein is ATP-dependent 6-phosphofructokinase of Geobacillus sp. (strain WCH70).